Consider the following 773-residue polypeptide: Carnitine O-palmitoyltransferase 1, liver isoform (773 aa).

The residue at position 2 (alanine 2) is an N-acetylalanine. The Cytoplasmic portion of the chain corresponds to 2-47 (AEAHQAVAFQFTVTPDGIDLRLSHEALRQIYLSGLHSWKKKFIRFK). A helical membrane pass occupies residues 48 to 73 (NGIITGVYPASPSSWLIVVVGVMTTM). The Mitochondrial intermembrane portion of the chain corresponds to 74–102 (YAKIDPSLGIIAKINRTLETANCMSSQTK). Residues 103–122 (NVVSGVLFGTGLWVALIVTM) traverse the membrane as a helical segment. At 123-773 (RYSLKVLLSY…LFGLSSNSKK (651 aa)) the chain is on the cytoplasmic side. Tyrosine 282 is modified (3'-nitrotyrosine). The active-site Proton acceptor is the histidine 473. Residue 555 to 567 (GKGIIKKCRTSPD) coordinates CoA. The residue at position 588 (threonine 588) is a Phosphothreonine. At tyrosine 589 the chain carries 3'-nitrotyrosine. Residues tyrosine 589 and threonine 602 each contribute to the (R)-carnitine site. Threonine 604 is subject to Phosphothreonine. Serine 741 and serine 747 each carry phosphoserine.

Belongs to the carnitine/choline acetyltransferase family. Homohexamer and homotrimer. Identified in a complex that contains at least CPT1A, ACSL1 and VDAC1. Also identified in complexes with ACSL1 and VDAC2 and VDAC3. Interacts with ZDHHC4. As to expression, strong expression in kidney and heart, and lower in liver and skeletal muscle.

The protein resides in the mitochondrion outer membrane. The catalysed reaction is (R)-carnitine + hexadecanoyl-CoA = O-hexadecanoyl-(R)-carnitine + CoA. The enzyme catalyses succinyl-CoA + L-lysyl-[protein] = N(6)-succinyl-L-lysyl-[protein] + CoA + H(+). It participates in lipid metabolism; fatty acid beta-oxidation. Inhibited by malonyl-CoA. In terms of biological role, catalyzes the transfer of the acyl group of long-chain fatty acid-CoA conjugates onto carnitine, an essential step for the mitochondrial uptake of long-chain fatty acids and their subsequent beta-oxidation in the mitochondrion. Also possesses a lysine succinyltransferase activity that can regulate enzymatic activity of substrate proteins such as ENO1 and metabolism independent of its classical carnitine O-palmitoyltransferase activity. Plays an important role in hepatic triglyceride metabolism. Also plays a role in inducible regulatory T-cell (iTreg) differentiation once activated by butyryl-CoA that antagonizes malonyl-CoA-mediated CPT1A repression. Sustains the IFN-I response by recruiting ZDHCC4 to palmitoylate MAVS at the mitochondria leading to MAVS stabilization and activation. Promotes ROS-induced oxidative stress in liver injury via modulation of NFE2L2 and NLRP3-mediated signaling pathways. The sequence is that of Carnitine O-palmitoyltransferase 1, liver isoform from Homo sapiens (Human).